The primary structure comprises 369 residues: Mitogen-activated protein kinase 11 (369 aa).

A Protein kinase domain is found at 40 to 326 (VPPLRPIGRG…VDEALCHPYL (287 aa)). Residues 46 to 54 (IGRGASGIV) and Lys69 each bind ATP. The active-site Proton acceptor is Asp166. A Phosphothreonine modification is found at Thr198. A TXY motif is present at residues 198-200 (TEY). At Tyr200 the chain carries Phosphotyrosine. Thr203 bears the Phosphothreonine mark.

This sequence belongs to the protein kinase superfamily. CMGC Ser/Thr protein kinase family. MAP kinase subfamily. As to quaternary structure, interacts with MKK1, MKK2 and MKK6. Dually phosphorylated on Thr-198 and Tyr-200, which activates the enzyme.

The catalysed reaction is L-seryl-[protein] + ATP = O-phospho-L-seryl-[protein] + ADP + H(+). It catalyses the reaction L-threonyl-[protein] + ATP = O-phospho-L-threonyl-[protein] + ADP + H(+). Activated by threonine and tyrosine phosphorylation. The chain is Mitogen-activated protein kinase 11 (MPK11) from Arabidopsis thaliana (Mouse-ear cress).